The following is a 330-amino-acid chain: Nitrilase 3 (330 aa).

A CN hydrolase domain is found at Val4–Phe273. Glu44 functions as the Proton acceptor in the catalytic mechanism. Catalysis depends on Lys128, which acts as the Proton donor. Residue Cys162 is the Nucleophile of the active site. The segment at Arg310–Ala330 is disordered.

Belongs to the carbon-nitrogen hydrolase superfamily. Nitrilase family.

The enzyme catalyses a nitrile + 2 H2O = a carboxylate + NH4(+). Its function is as follows. Nitrilases catalyze the mild hydrolytic conversion of organonitriles directly to the corresponding carboxylic acids. The sequence is that of Nitrilase 3 from Unknown prokaryotic organism.